The sequence spans 306 residues: Porphobilinogen deaminase (306 aa).

The residue at position 239 (cysteine 239) is an S-(dipyrrolylmethanemethyl)cysteine.

The protein belongs to the HMBS family. In terms of assembly, monomer. Dipyrromethane is required as a cofactor.

The catalysed reaction is 4 porphobilinogen + H2O = hydroxymethylbilane + 4 NH4(+). The protein operates within porphyrin-containing compound metabolism; protoporphyrin-IX biosynthesis; coproporphyrinogen-III from 5-aminolevulinate: step 2/4. In terms of biological role, tetrapolymerization of the monopyrrole PBG into the hydroxymethylbilane pre-uroporphyrinogen in several discrete steps. This chain is Porphobilinogen deaminase, found in Helicobacter pylori (strain Shi470).